A 402-amino-acid chain; its full sequence is 4-hydroxy-3-methylbut-2-enyl diphosphate reductase (402 aa).

Cys-66 is a [4Fe-4S] cluster binding site. A (2E)-4-hydroxy-3-methylbut-2-enyl diphosphate-binding site is contributed by His-96. His-96 provides a ligand contact to dimethylallyl diphosphate. His-96 provides a ligand contact to isopentenyl diphosphate. A [4Fe-4S] cluster-binding site is contributed by Cys-157. His-185 lines the (2E)-4-hydroxy-3-methylbut-2-enyl diphosphate pocket. Residue His-185 coordinates dimethylallyl diphosphate. His-185 is an isopentenyl diphosphate binding site. The active-site Proton donor is Glu-187. Thr-250 contributes to the (2E)-4-hydroxy-3-methylbut-2-enyl diphosphate binding site. Cys-288 contacts [4Fe-4S] cluster. Ser-317, Ser-318, Asn-319, and Ser-379 together coordinate (2E)-4-hydroxy-3-methylbut-2-enyl diphosphate. Dimethylallyl diphosphate-binding residues include Ser-317, Ser-318, Asn-319, and Ser-379. The isopentenyl diphosphate site is built by Ser-317, Ser-318, Asn-319, and Ser-379.

The protein belongs to the IspH family. [4Fe-4S] cluster is required as a cofactor.

It catalyses the reaction isopentenyl diphosphate + 2 oxidized [2Fe-2S]-[ferredoxin] + H2O = (2E)-4-hydroxy-3-methylbut-2-enyl diphosphate + 2 reduced [2Fe-2S]-[ferredoxin] + 2 H(+). It carries out the reaction dimethylallyl diphosphate + 2 oxidized [2Fe-2S]-[ferredoxin] + H2O = (2E)-4-hydroxy-3-methylbut-2-enyl diphosphate + 2 reduced [2Fe-2S]-[ferredoxin] + 2 H(+). It participates in isoprenoid biosynthesis; dimethylallyl diphosphate biosynthesis; dimethylallyl diphosphate from (2E)-4-hydroxy-3-methylbutenyl diphosphate: step 1/1. It functions in the pathway isoprenoid biosynthesis; isopentenyl diphosphate biosynthesis via DXP pathway; isopentenyl diphosphate from 1-deoxy-D-xylulose 5-phosphate: step 6/6. In terms of biological role, catalyzes the conversion of 1-hydroxy-2-methyl-2-(E)-butenyl 4-diphosphate (HMBPP) into a mixture of isopentenyl diphosphate (IPP) and dimethylallyl diphosphate (DMAPP). Acts in the terminal step of the DOXP/MEP pathway for isoprenoid precursor biosynthesis. This chain is 4-hydroxy-3-methylbut-2-enyl diphosphate reductase, found in Nostoc punctiforme (strain ATCC 29133 / PCC 73102).